Here is a 397-residue protein sequence, read N- to C-terminus: Probable sugar efflux transporter (397 aa).

The next 12 membrane-spanning stretches (helical) occupy residues 15–35, 51–71, 81–101, 103–123, 136–156, 170–190, 209–229, 246–266, 273–293, 301–321, 333–353, and 364–384; these read VVTL…PVGL, GIML…FMLL, LICL…AWSF, VLVI…SITA, AQAL…GLPV, FLAI…LLPL, PALM…YTAY, FATV…VIFG, ASVL…LLMP, LAIL…GMQV, VAMS…ALVG, and DIGY…VIIF.

The protein belongs to the major facilitator superfamily. SotB (TC 2.A.1.2) family.

It localises to the cell inner membrane. In terms of biological role, involved in the efflux of sugars. The physiological role may be the reduction of the intracellular concentration of toxic sugars or sugar metabolites. The sequence is that of Probable sugar efflux transporter from Escherichia fergusonii (strain ATCC 35469 / DSM 13698 / CCUG 18766 / IAM 14443 / JCM 21226 / LMG 7866 / NBRC 102419 / NCTC 12128 / CDC 0568-73).